A 137-amino-acid polypeptide reads, in one-letter code: MLQPKRTRFRKQFKGRIHGVSKGGTDLNFGAYGLKAVEPERITARQIEAARRAITRYMKRSGRVWIRIFPDLPVTSKPTEVRMGKGKGSVDYWAARVAPGRIMFELDGIPEDVAREALRLGAAKLPIKTRFIQRIAE.

Belongs to the universal ribosomal protein uL16 family. Part of the 50S ribosomal subunit.

Its function is as follows. Binds 23S rRNA and is also seen to make contacts with the A and possibly P site tRNAs. The chain is Large ribosomal subunit protein uL16 from Bartonella henselae (strain ATCC 49882 / DSM 28221 / CCUG 30454 / Houston 1) (Rochalimaea henselae).